The sequence spans 441 residues: Serine carboxypeptidase-like 2 (441 aa).

The N-terminal stretch at 1–29 (MANKYFSSVLKSLLLLLHLVFLSKQHVDS) is a signal peptide. Disulfide bonds link Cys-88/Cys-331, Cys-252/Cys-266, and Cys-290/Cys-297. The N-linked (GlcNAc...) asparagine glycan is linked to Asn-109. Ser-184 is a catalytic residue. Asn-350 carries N-linked (GlcNAc...) asparagine glycosylation. The active site involves Asp-366. Residue Asn-382 is glycosylated (N-linked (GlcNAc...) asparagine). Residue His-419 is part of the active site.

It belongs to the peptidase S10 family. In terms of tissue distribution, expressed in seedlings and roots.

Its subcellular location is the secreted. Probable carboxypeptidase. The protein is Serine carboxypeptidase-like 2 (SCPL2) of Arabidopsis thaliana (Mouse-ear cress).